A 264-amino-acid polypeptide reads, in one-letter code: Galectin-3 (264 aa).

A disordered region spans residues 1–105 (MADSFSLNDA…GAFPGQPGAP (105 aa)). At alanine 2 the chain carries N-acetylalanine. Serine 6 is modified (phosphoserine; by CK1). Tandem repeats lie at residues 35–43 (YPGAAYPGA), 44–52 (YPGQAPPGA), 53–61 (YPGQAPPGA), 62–70 (YPGQAPPSA), 71–79 (YPGPTAPGA), 80–88 (YPGPTAPGA), 89–97 (YPGQPAPGA), and 98–107 (FPGQPGAPGA). The interval 35–114 (YPGAAYPGAY…PGAYPQCSGG (80 aa)) is 9 X 9 AA tandem repeats of Y-P-G-X(3)-P-[GS]-A. A compositionally biased stretch (low complexity) spans 37 to 46 (GAAYPGAYPG). Residues 47-75 (QAPPGAYPGQAPPGAYPGQAPPSAYPGPT) show a composition bias toward pro residues. Residues 76–105 (APGAYPGPTAPGAYPGQPAPGAFPGQPGAP) are compositionally biased toward low complexity. A 9; truncated repeat occupies 108–114 (YPQCSGG). The Galectin domain maps to 132–262 (YDLPLPGGVM…DITLTSANHA (131 aa)). 195-201 (WGKEERQ) contacts a beta-D-galactoside. Serine 202 carries the post-translational modification Phosphoserine. The short motif at 240–255 (KNLREISQLGISGDIT) is the Nuclear export signal element.

In terms of assembly, probably forms homo- or heterodimers. Interacts with DMBT1. Interacts with CD6 and ALCAM. Forms a complex with the ITGA3, ITGB1 and CSPG4. Interacts with LGALS3BP, LYPD3, ZFTRAF1 and UACA. Interacts with TRIM16; this interaction mediates autophagy of damage endomembranes. Interacts with and inhibits by binding NCR3/NKp30. As to expression, the highest levels are found in activated macrophages.

It is found in the cytoplasm. The protein resides in the nucleus. It localises to the secreted. Functionally, galactose-specific lectin which binds IgE. May mediate with the alpha-3, beta-1 integrin the stimulation by CSPG4 of endothelial cells migration. Together with DMBT1, required for terminal differentiation of columnar epithelial cells during early embryogenesis. In the nucleus: acts as a pre-mRNA splicing factor. Involved in acute inflammatory responses including neutrophil activation and adhesion, chemoattraction of monocytes macrophages, opsonization of apoptotic neutrophils, and activation of mast cells. Together with TRIM16, coordinates the recognition of membrane damage with mobilization of the core autophagy regulators ATG16L1 and BECN1 in response to damaged endomembranes. When secreted, interacts with NK cell-activating receptor NCR3/NKp30 acting as an inhibitory ligand which antagonizes NK cell attack. This is Galectin-3 (Lgals3) from Mus musculus (Mouse).